A 25-amino-acid chain; its full sequence is Brevinin-2R (25 aa).

The cysteines at positions 19 and 25 are disulfide-linked.

Belongs to the frog skin active peptide (FSAP) family. Brevinin subfamily. In terms of tissue distribution, expressed by the skin glands.

It localises to the secreted. Its function is as follows. Cytotoxic to cancer cells, acts via the activation of the lysosomal-mitochondrial death pathway and autophagy-like cell death. Does not show significant hemolytic activity. This chain is Brevinin-2R, found in Pelophylax ridibundus (Marsh frog).